We begin with the raw amino-acid sequence, 107 residues long: Putative double-stranded DNA mimic protein PC1_1990 (107 aa).

It belongs to the putative dsDNA mimic protein family.

In terms of biological role, may act as a double-stranded DNA (dsDNA) mimic. Probably regulates the activity of a dsDNA-binding protein. The polypeptide is Putative double-stranded DNA mimic protein PC1_1990 (Pectobacterium carotovorum subsp. carotovorum (strain PC1)).